Here is a 240-residue protein sequence, read N- to C-terminus: DNA repair protein RecO (240 aa).

The protein belongs to the RecO family.

Functionally, involved in DNA repair and RecF pathway recombination. This chain is DNA repair protein RecO, found in Xanthomonas oryzae pv. oryzae (strain MAFF 311018).